A 292-amino-acid polypeptide reads, in one-letter code: UDP-3-O-acyl-N-acetylglucosamine deacetylase (292 aa).

His-75, His-231, and Asp-235 together coordinate Zn(2+). His-258 acts as the Proton donor in catalysis.

The protein belongs to the LpxC family. Zn(2+) is required as a cofactor.

It catalyses the reaction a UDP-3-O-[(3R)-3-hydroxyacyl]-N-acetyl-alpha-D-glucosamine + H2O = a UDP-3-O-[(3R)-3-hydroxyacyl]-alpha-D-glucosamine + acetate. Its pathway is glycolipid biosynthesis; lipid IV(A) biosynthesis; lipid IV(A) from (3R)-3-hydroxytetradecanoyl-[acyl-carrier-protein] and UDP-N-acetyl-alpha-D-glucosamine: step 2/6. In terms of biological role, catalyzes the hydrolysis of UDP-3-O-myristoyl-N-acetylglucosamine to form UDP-3-O-myristoylglucosamine and acetate, the committed step in lipid A biosynthesis. The chain is UDP-3-O-acyl-N-acetylglucosamine deacetylase from Nautilia profundicola (strain ATCC BAA-1463 / DSM 18972 / AmH).